A 227-amino-acid chain; its full sequence is ATP-dependent dethiobiotin synthetase BioD (227 aa).

12 to 17 (DVGKTV) provides a ligand contact to ATP. A Mg(2+)-binding site is contributed by Thr16. Lys37 is an active-site residue. A substrate-binding site is contributed by Thr41. ATP-binding positions include Asp50, 110 to 113 (EGAG), 171 to 172 (GS), and 201 to 203 (PAG). Positions 50 and 110 each coordinate Mg(2+).

The protein belongs to the dethiobiotin synthetase family. As to quaternary structure, homodimer. Mg(2+) is required as a cofactor.

The protein resides in the cytoplasm. It catalyses the reaction (7R,8S)-7,8-diammoniononanoate + CO2 + ATP = (4R,5S)-dethiobiotin + ADP + phosphate + 3 H(+). The protein operates within cofactor biosynthesis; biotin biosynthesis; biotin from 7,8-diaminononanoate: step 1/2. Catalyzes a mechanistically unusual reaction, the ATP-dependent insertion of CO2 between the N7 and N8 nitrogen atoms of 7,8-diaminopelargonic acid (DAPA, also called 7,8-diammoniononanoate) to form a ureido ring. The polypeptide is ATP-dependent dethiobiotin synthetase BioD (Rhodococcus erythropolis (strain PR4 / NBRC 100887)).